Here is a 384-residue protein sequence, read N- to C-terminus: Spermidine/putrescine import ATP-binding protein PotA (384 aa).

The ABC transporter domain maps to 26-260 (ISLEKVSKTY…PATRFVAGFI (235 aa)). 62–69 (GPSGCGKT) is a binding site for ATP.

It belongs to the ABC transporter superfamily. Spermidine/putrescine importer (TC 3.A.1.11.1) family. The complex is composed of two ATP-binding proteins (PotA), two transmembrane proteins (PotB and PotC) and a solute-binding protein (PotD).

It is found in the cell membrane. It catalyses the reaction ATP + H2O + polyamine-[polyamine-binding protein]Side 1 = ADP + phosphate + polyamineSide 2 + [polyamine-binding protein]Side 1.. Functionally, part of the ABC transporter complex PotABCD involved in spermidine/putrescine import. Responsible for energy coupling to the transport system. The chain is Spermidine/putrescine import ATP-binding protein PotA from Thermobifida fusca (strain YX).